The following is a 151-amino-acid chain: Nucleoside diphosphate kinase (151 aa).

ATP contacts are provided by Lys11, Phe59, Arg87, Thr93, Arg104, and Asn114. The active-site Pros-phosphohistidine intermediate is the His117.

It belongs to the NDK family. Homohexamer. Mg(2+) is required as a cofactor.

The enzyme catalyses a 2'-deoxyribonucleoside 5'-diphosphate + ATP = a 2'-deoxyribonucleoside 5'-triphosphate + ADP. It catalyses the reaction a ribonucleoside 5'-diphosphate + ATP = a ribonucleoside 5'-triphosphate + ADP. Functionally, major role in the synthesis of nucleoside triphosphates other than ATP. The ATP gamma phosphate is transferred to the NDP beta phosphate via a ping-pong mechanism, using a phosphorylated active-site intermediate. The sequence is that of Nucleoside diphosphate kinase from Ginglymostoma cirratum (Nurse shark).